The primary structure comprises 350 residues: Phosphoribosylformylglycinamidine cyclo-ligase (350 aa).

Belongs to the AIR synthase family.

The protein resides in the cytoplasm. It catalyses the reaction 2-formamido-N(1)-(5-O-phospho-beta-D-ribosyl)acetamidine + ATP = 5-amino-1-(5-phospho-beta-D-ribosyl)imidazole + ADP + phosphate + H(+). It functions in the pathway purine metabolism; IMP biosynthesis via de novo pathway; 5-amino-1-(5-phospho-D-ribosyl)imidazole from N(2)-formyl-N(1)-(5-phospho-D-ribosyl)glycinamide: step 2/2. The polypeptide is Phosphoribosylformylglycinamidine cyclo-ligase (Cupriavidus necator (strain ATCC 17699 / DSM 428 / KCTC 22496 / NCIMB 10442 / H16 / Stanier 337) (Ralstonia eutropha)).